A 511-amino-acid chain; its full sequence is GMP synthase [glutamine-hydrolyzing] (511 aa).

One can recognise a Glutamine amidotransferase type-1 domain in the interval 5–195 (PIVVLDFGSQ…AKHICGCEST (191 aa)). The active-site Nucleophile is the Cys82. Residues His169 and Glu171 contribute to the active site. The GMPS ATP-PPase domain occupies 196–386 (WNMGSFAKEQ…LGLPKSMISR (191 aa)). 223-229 (SGGVDSS) serves as a coordination point for ATP.

In terms of assembly, homodimer.

The catalysed reaction is XMP + L-glutamine + ATP + H2O = GMP + L-glutamate + AMP + diphosphate + 2 H(+). It functions in the pathway purine metabolism; GMP biosynthesis; GMP from XMP (L-Gln route): step 1/1. Functionally, catalyzes the synthesis of GMP from XMP. In Aliarcobacter butzleri (strain RM4018) (Arcobacter butzleri), this protein is GMP synthase [glutamine-hydrolyzing].